We begin with the raw amino-acid sequence, 62 residues long: Guanine nucleotide-binding protein subunit gamma (62 aa).

Position 59 is a cysteine methyl ester (C59). The S-geranylgeranyl cysteine moiety is linked to residue C59. Positions 60–62 (SVL) are cleaved as a propeptide — removed in mature form.

This sequence belongs to the G protein gamma family. In terms of assembly, g proteins are composed of 3 units, alpha, beta and gamma. Interacts with gpb-1 and gpb-2.

It is found in the cell membrane. In terms of biological role, guanine nucleotide-binding proteins (G proteins) are involved as a modulator or transducer in various transmembrane signaling systems. The beta and gamma chains are required for the GTPase activity, for replacement of GDP by GTP, and for G protein-effector interaction. The chain is Guanine nucleotide-binding protein subunit gamma (gpc-1) from Caenorhabditis briggsae.